The primary structure comprises 140 residues: ATP synthase epsilon chain (140 aa).

Belongs to the ATPase epsilon chain family. As to quaternary structure, F-type ATPases have 2 components, CF(1) - the catalytic core - and CF(0) - the membrane proton channel. CF(1) has five subunits: alpha(3), beta(3), gamma(1), delta(1), epsilon(1). CF(0) has three main subunits: a, b and c.

The protein resides in the cell inner membrane. Produces ATP from ADP in the presence of a proton gradient across the membrane. The protein is ATP synthase epsilon chain of Thermodesulfovibrio yellowstonii (strain ATCC 51303 / DSM 11347 / YP87).